The chain runs to 582 residues: 2-isopropylmalate synthase (582 aa).

The region spanning 40–314 (PRWCAVDLRD…DPMIDFSDID (275 aa)) is the Pyruvate carboxyltransferase domain. Residues aspartate 49, histidine 253, histidine 255, and asparagine 289 each coordinate Mg(2+). The interval 456-582 (SPAGHPGGQW…NRAIRDNQVD (127 aa)) is regulatory domain.

It belongs to the alpha-IPM synthase/homocitrate synthase family. LeuA type 2 subfamily. In terms of assembly, homodimer. The cofactor is Mg(2+).

The protein localises to the cytoplasm. The enzyme catalyses 3-methyl-2-oxobutanoate + acetyl-CoA + H2O = (2S)-2-isopropylmalate + CoA + H(+). Its pathway is amino-acid biosynthesis; L-leucine biosynthesis; L-leucine from 3-methyl-2-oxobutanoate: step 1/4. Catalyzes the condensation of the acetyl group of acetyl-CoA with 3-methyl-2-oxobutanoate (2-ketoisovalerate) to form 3-carboxy-3-hydroxy-4-methylpentanoate (2-isopropylmalate). This is 2-isopropylmalate synthase from Renibacterium salmoninarum (strain ATCC 33209 / DSM 20767 / JCM 11484 / NBRC 15589 / NCIMB 2235).